We begin with the raw amino-acid sequence, 24 residues long: Positive regulator of RepFIC repA1 expression (24 aa).

The polypeptide is Positive regulator of RepFIC repA1 expression (repL) (Escherichia coli).